Consider the following 367-residue polypeptide: C-C chemokine receptor type 6 (367 aa).

Residues 1–39 (MNSTESYFGTDDYDNTEYYSIPPDHGPCSLEEVRNFTKV) lie on the Extracellular side of the membrane. N-linked (GlcNAc...) asparagine glycosylation is found at asparagine 2 and asparagine 35. The chain crosses the membrane as a helical span at residues 40–66 (FVPIAYSLICVFGLLGNIMVVMTFAFY). The Cytoplasmic portion of the chain corresponds to 67 to 75 (KKARSMTDV). Residues 76–96 (YLLNMAITDILFVLTLPFWAV) traverse the membrane as a helical segment. Topologically, residues 97 to 111 (THATNTWVFSDALCK) are extracellular. Cysteines 110 and 189 form a disulfide. The helical transmembrane segment at 112–133 (LMKGTYAVNFNCGMLLLACISM) threads the bilayer. The Cytoplasmic portion of the chain corresponds to 134–151 (DRYIAIVQATKSFRVRSR). A helical membrane pass occupies residues 152-172 (TLTHSKVICVAVWFISIIISS). Residues 173-203 (PTFIFNKKYELQDRDVCEPRYRSVSEPITWK) lie on the Extracellular side of the membrane. The helical transmembrane segment at 204–230 (LLGMGLELFFGFFTPLLFMVFCYLFII) threads the bilayer. The Cytoplasmic portion of the chain corresponds to 231–246 (KTLVQAQNSKRHRAIR). The helical transmembrane segment at 247–271 (VVIAVVLVFLACQIPHNMVLLVTAV) threads the bilayer. Over 272–295 (NTGKVGRSCSTEKVLAYTRNVAEV) the chain is Extracellular. Residues 296 to 313 (LAFLHCCLNPVLYAFIGQ) traverse the membrane as a helical segment. Residues 314–367 (KFRNYFMKIMKDVWCMRRKNKMPGFLCARVYSESYISRQTSETVENDNASSFTM) are Cytoplasmic-facing.

This sequence belongs to the G-protein coupled receptor 1 family. In terms of tissue distribution, sperm. Mainly localized in the principal piece and neck region of the tail but is also found in the acrosomal region in a small percentage of sperm cells. Expressed in natural regulatory T cells (nTregs) and a subset of early thymocyte progenitor double-negative 1 (DN1) cells. Expressed in memory B cells. Expressed by IL17 producing helper T-cells (Th17), type 1 effector cells (Th1), type 2 effector cells (Th2) and regulatory T-cells (Treg) (at protein level). Expressed by Th17 cells in spleen, Peyers patches, and lamina propria of small and large intestine. Highly expressed in testis, lung, colon, and dendritic cells.

The protein resides in the cell membrane. It localises to the cell surface. In terms of biological role, receptor for the C-C type chemokine CCL20. Binds to CCL20 and subsequently transduces a signal by increasing the intracellular calcium ion levels. Although CCL20 is its major ligand it can also act as a receptor for non-chemokine ligands such as beta-defensins. Binds to defensin DEFB1 leading to increase in intracellular calcium ions and cAMP levels. Its binding to DEFB1 is essential for the function of DEFB1 in regulating sperm motility and bactericidal activity. Binds to defensins DEFB4 and DEFB4A/B and mediates their chemotactic effects. The ligand-receptor pair CCL20-CCR6 is responsible for the chemotaxis of dendritic cells (DC), effector/memory T-cells and B-cells and plays an important role at skin and mucosal surfaces under homeostatic and inflammatory conditions, as well as in pathology, including cancer and various autoimmune diseases. CCR6-mediated signals are essential for immune responses to microbes in the intestinal mucosa and in the modulation of inflammatory responses initiated by tissue insult and trauma. CCR6 is essential for the recruitment of both the pro-inflammatory IL17 producing helper T-cells (Th17) and the regulatory T-cells (Treg) to sites of inflammation. Required for the normal migration of Th17 cells in Peyers patches and other related tissue sites of the intestine and plays a role in regulating effector T-cell balance and distribution in inflamed intestine. Plays an important role in the coordination of early thymocyte precursor migration events important for normal subsequent thymocyte precursor development, but is not required for the formation of normal thymic natural regulatory T-cells (nTregs). Required for optimal differentiation of DN2 and DN3 thymocyte precursors. Essential for B-cell localization in the subepithelial dome of Peyers-patches and for efficient B-cell isotype switching to IgA in the Peyers-patches. Essential for appropriate anatomical distribution of memory B-cells in the spleen and for the secondary recall response of memory B-cells. Positively regulates sperm motility and chemotaxis via its binding to CCL20. In Mus musculus (Mouse), this protein is C-C chemokine receptor type 6 (Ccr6).